A 487-amino-acid chain; its full sequence is MIKTLDLVPVLPEIFMAVAGLALLMLGVFRKEDSTKSVSVLVILALGAAMVLVSSLGGERLTAFNGLFVADRFAGFAKGLVLVASAIATAMSLPYLEREKIGRFEYPVLVLFATLGMMMMISANDFIALYLGLELQSLALYVLAAYNRDNARATEAGLKYFVLGSLASGLLLYGISLLYGFAGTTSFEGLANLFAGGHDHPIKPNMGIIAGLVFVLAGLSFKVSAVPFHMWAPDVYEGAPTPVTSFFAVAPKIAALCLLVRVMTGPFADLVEQWRQVVTFIAIGSMFVGSFAAVVQTNIKRLMAYSSIGHVGFVLVGIAAGSTLGIQGVLIYLAIYLFMNVGAFAVILSMRQKGRMVEGIDDLAGLSKTHPMMAFVMAVLMFSMAGVPPLAGFWGKFYVFMAAIESGLYTLSILGVLSSVVSTYYYLRIVKVMYFDEPVEAFDKPVGTSMTLVMAVSTIVILAFTLIPAPLVTSAKAAAQVLFPAAG.

13 helical membrane passes run 9 to 29 (PVLP…LGVF), 38 to 58 (VSVL…SLGG), 73 to 93 (FAGF…AMSL), 108 to 128 (VLVL…DFIA), 161 to 181 (FVLG…LYGF), 208 to 228 (IIAG…AVPF), 240 to 260 (PTPV…CLLV), 277 to 297 (VVTF…VVQT), 306 to 326 (SSIG…TLGI), 328 to 348 (GVLI…AVIL), 374 to 394 (AFVM…AGFW), 408 to 430 (LYTL…LRIV), and 452 to 472 (LVMA…APLV).

This sequence belongs to the complex I subunit 2 family. NDH-1 is composed of 14 different subunits. Subunits NuoA, H, J, K, L, M, N constitute the membrane sector of the complex.

The protein resides in the cell inner membrane. The enzyme catalyses a quinone + NADH + 5 H(+)(in) = a quinol + NAD(+) + 4 H(+)(out). In terms of biological role, NDH-1 shuttles electrons from NADH, via FMN and iron-sulfur (Fe-S) centers, to quinones in the respiratory chain. The immediate electron acceptor for the enzyme in this species is believed to be ubiquinone. Couples the redox reaction to proton translocation (for every two electrons transferred, four hydrogen ions are translocated across the cytoplasmic membrane), and thus conserves the redox energy in a proton gradient. This is NADH-quinone oxidoreductase subunit N from Paramagnetospirillum magneticum (strain ATCC 700264 / AMB-1) (Magnetospirillum magneticum).